A 776-amino-acid polypeptide reads, in one-letter code: Protein translocase subunit SecA 2 (776 aa).

ATP is bound by residues Gln80, 98–102, and Asp486; that span reads GEGKT.

This sequence belongs to the SecA family. As to quaternary structure, monomer and homodimer. Part of the essential Sec protein translocation apparatus which comprises SecA, SecYEG and auxiliary proteins SecDF. Other proteins may also be involved.

The protein localises to the cell membrane. The protein resides in the cytoplasm. The catalysed reaction is ATP + H2O + cellular proteinSide 1 = ADP + phosphate + cellular proteinSide 2.. In terms of biological role, part of the Sec protein translocase complex. Interacts with the SecYEG preprotein conducting channel. Has a central role in coupling the hydrolysis of ATP to the transfer of proteins into and across the cell membrane, serving as an ATP-driven molecular motor driving the stepwise translocation of polypeptide chains across the membrane. This chain is Protein translocase subunit SecA 2, found in Listeria monocytogenes serotype 4b (strain F2365).